The following is a 203-amino-acid chain: LexA repressor (203 aa).

The H-T-H motif DNA-binding region spans 28 to 48 (VRELCDELGFKSPNTAHFHLK). Active-site for autocatalytic cleavage activity residues include Ser-122 and Lys-159.

Belongs to the peptidase S24 family. As to quaternary structure, homodimer.

The catalysed reaction is Hydrolysis of Ala-|-Gly bond in repressor LexA.. Its function is as follows. Represses a number of genes involved in the response to DNA damage (SOS response), including recA and lexA. In the presence of single-stranded DNA, RecA interacts with LexA causing an autocatalytic cleavage which disrupts the DNA-binding part of LexA, leading to derepression of the SOS regulon and eventually DNA repair. The polypeptide is LexA repressor (Desulfatibacillum aliphaticivorans).